A 471-amino-acid chain; its full sequence is Desmin (471 aa).

The head stretch occupies residues 2–109 (SQAYSSSQRV…QEFLTTRTNE (108 aa)). S7 carries the phosphoserine; by CDK1 modification. Position 12 is a phosphoserine; by AURKB (S12). R16 is subject to Omega-N-methylarginine. A Phosphothreonine; by AURKB and ROCK1 modification is found at T17. S28 is subject to Phosphoserine; by CDK1. A Phosphoserine modification is found at S31. S32 carries the post-translational modification Phosphoserine; by CDK1. R37 is subject to Asymmetric dimethylarginine; alternate. R37 carries the post-translational modification Omega-N-methylarginine; alternate. Phosphoserine is present on S45. The residue at position 58 (R58) is an ADP-ribosylarginine. Position 60 is a phosphoserine; by AURKB (S60). At R70 the chain carries Omega-N-methylarginine. T77 is subject to Phosphothreonine; by ROCK1. S81 carries the post-translational modification Phosphoserine. The region spanning 109–417 (EKVELQELND…KLLEGEESRI (309 aa)) is the IF rod domain. The interval 110–142 (KVELQELNDRFANYIEKVRFLEQQNAALAAEVN) is coil 1A. The tract at residues 143-152 (RLKGREPTRV) is linker 1. Residues 153 to 253 (AEIYEEELRE…HEEEIRELQA (101 aa)) are coil 1B. Positions 254–269 (QLQEQQVQVEMDMSKP) are linker 12. Residues 269 to 416 (PDLTAALRDI…RKLLEGEESR (148 aa)) are interaction with NEB. A coil 2A region spans residues 270–288 (DLTAALRDIRAQYETIAAK). The linker 2 stretch occupies residues 289 to 296 (NISEAEEW). S291, S359, S362, and S425 each carry phosphoserine. Residues 297–413 (YKSKVSDLTQ…ATYRKLLEGE (117 aa)) are coil 2B. Residues 414–471 (ESRINLPIQTFSALNFRETSPEQRGSEVHTKKTVMIKTIETRDGEVVSEATQQQHEVL) are tail. The interval 439-454 (SEVHTKKTVMIKTIET) is interaction with CRYAB.

This sequence belongs to the intermediate filament family. As to quaternary structure, homomer. Interacts with DST. Interacts with MTM1. Interacts with EPPK1; interaction is dependent of higher-order structure of intermediate filament. Interacts with CRYAB. Interacts with NEB (via nebulin repeats 160-164). Interacts (via rod region) with NEBL (via nebulin repeats 1-5). Interacts with ASB2; the interaction targets DES for proteasomal degradation. Interacts with PKP1. Interacts with FLII. ADP-ribosylation prevents ability to form intermediate filaments. Post-translationally, phosphorylation at Ser-7, Ser-28 and Ser-32 by CDK1 and phosphorylation at Ser-60 by AURKB contribute to efficient separation of desmin intermediate filaments during mitosis. In terms of processing, ubiquitination by a SCF-like complex containing ASB2 leads to proteasomal degradation.

The protein resides in the cytoplasm. The protein localises to the myofibril. Its subcellular location is the sarcomere. It localises to the z line. It is found in the cell membrane. The protein resides in the sarcolemma. The protein localises to the nucleus. Its subcellular location is the cell tip. It localises to the nucleus envelope. In terms of biological role, muscle-specific type III intermediate filament essential for proper muscular structure and function. Plays a crucial role in maintaining the structure of sarcomeres, inter-connecting the Z-disks and forming the myofibrils, linking them not only to the sarcolemmal cytoskeleton, but also to the nucleus and mitochondria, thus providing strength for the muscle fiber during activity. In adult striated muscle they form a fibrous network connecting myofibrils to each other and to the plasma membrane from the periphery of the Z-line structures. May act as a sarcomeric microtubule-anchoring protein: specifically associates with detyrosinated tubulin-alpha chains, leading to buckled microtubules and mechanical resistance to contraction. Required for nuclear membrane integrity, via anchoring at the cell tip and nuclear envelope, resulting in maintenance of microtubule-derived intracellular mechanical forces. Contributes to the transcriptional regulation of the NKX2-5 gene in cardiac progenitor cells during a short period of cardiomyogenesis and in cardiac side population stem cells in the adult. Plays a role in maintaining an optimal conformation of nebulette (NEB) on heart muscle sarcomeres to bind and recruit cardiac alpha-actin. This Sus scrofa (Pig) protein is Desmin (DES).